Reading from the N-terminus, the 185-residue chain is UPF0301 protein MS0260 (185 aa).

It belongs to the UPF0301 (AlgH) family.

The sequence is that of UPF0301 protein MS0260 from Mannheimia succiniciproducens (strain KCTC 0769BP / MBEL55E).